Here is a 337-residue protein sequence, read N- to C-terminus: Hairy/enhancer-of-split related with YRPW motif protein 2 (337 aa).

The interval 1 to 52 (MKRPCEETTSESDMDETIDVGSENNYSGQSTSSVIRLNSPTTTSQIMARKKR) is disordered. Acidic residues predominate over residues 8–18 (TTSESDMDETI). The segment covering 22-46 (SENNYSGQSTSSVIRLNSPTTTSQI) has biased composition (polar residues). The transcriptional repression and interaction with NCOR1 and SIN3A stretch occupies residues 47 to 116 (MARKKRRGII…GGKGYFDAHA (70 aa)). Positions 48-103 (ARKKRRGIIEKRRRDRINNSLSELRRLVPTAFEKQGSAKLEKAEILQMTVDHLKML) constitute a bHLH domain. Residues 122–157 (MSIGFRECLTEVARYLSSVEGLDSSDPLRVRLVSHL) enclose the Orange domain. Residues 307–325 (LSVSATSSPQQTSSGTNNK) show a composition bias toward polar residues. Residues 307 to 337 (LSVSATSSPQQTSSGTNNKPYRPWGTEVGAF) form a disordered region. Residues 327–330 (YRPW) carry the YRPW motif motif.

This sequence belongs to the HEY family. May self-associate. Interacts with GATA4, HES1 and HEYL. Interacts with HDAC1, NCOR1 and SIN3A. Interacts with ARNT and GATA6.

It is found in the nucleus. Downstream effector of Notch signaling which may be required for cardiovascular development. Transcriptional repressor which binds preferentially to the canonical E box sequence 5'-CACGTG-3'. Represses transcription by the cardiac transcriptional activators GATA4 and GATA6. This is Hairy/enhancer-of-split related with YRPW motif protein 2 (HEY2) from Homo sapiens (Human).